The sequence spans 295 residues: Alpha-ketoglutarate-dependent sulfate ester dioxygenase (295 aa).

Substrate is bound at residue His71. 2 residues coordinate Fe cation: His98 and Asp100. Substrate is bound at residue Val101. Thr125 contributes to the 2-oxoglutarate binding site. His252 serves as a coordination point for Fe cation. 2-oxoglutarate contacts are provided by Arg263 and Arg267.

This sequence belongs to the TfdA dioxygenase family. It depends on Fe(2+) as a cofactor.

It carries out the reaction a primary linear alkyl sulfate ester + 2-oxoglutarate + O2 = an aldehyde + sulfate + succinate + CO2 + H(+). It catalyses the reaction 2-ethylhexyl sulfate + 2-oxoglutarate + O2 = 2-ethylhexanal + sulfate + succinate + CO2 + H(+). The enzyme catalyses hexyl sulfate + 2-oxoglutarate + O2 = hexanal + sulfate + succinate + CO2 + H(+). The catalysed reaction is pentyl sulfate + 2-oxoglutarate + O2 = pentanal + sulfate + succinate + CO2 + H(+). It carries out the reaction heptyl sulfate + 2-oxoglutarate + O2 = heptanal + sulfate + succinate + CO2 + H(+). Functionally, alpha-ketoglutarate-dependent sulfate ester dioxygenase, which oxidizes medium-chain alkyl-sulfate esters. Shows preference for 2-ethylhexyl sulfate (2-EHS) in vitro, leading to the formation of succinate and 2-ethylhexanal. Has likely a role in sulfate scavenging in vivo. In terms of biological role, also causes the inactivation of the 2-carboxyquinoxaline Ty38c (an antitubercular compound that inhibits DprE1) via oxidative decarboxylation, using Ty38c instead of alpha-ketoglutarate as a substrate. Is thus responsible for primary resistance of M.tuberculosis to Ty38c in vitro. Overexpression of Rv3406 causes resistance to Ty38c. The chain is Alpha-ketoglutarate-dependent sulfate ester dioxygenase from Mycobacterium tuberculosis (strain ATCC 25618 / H37Rv).